Consider the following 696-residue polypeptide: Equisetin cluster transcription factor eqxF (696 aa).

2 disordered regions span residues 1 to 24 (MADQ…GRAR) and 73 to 117 (NQEQ…PADY).

The protein localises to the nucleus. In terms of biological role, transcription factor that regulates the expression of the gene cluster that mediates the biosynthesis of Equisetin. The protein is Equisetin cluster transcription factor eqxF of Fusarium heterosporum.